A 337-amino-acid chain; its full sequence is Cobalt-precorrin-5B C(1)-methyltransferase (337 aa).

The protein belongs to the CbiD family.

It catalyses the reaction Co-precorrin-5B + S-adenosyl-L-methionine = Co-precorrin-6A + S-adenosyl-L-homocysteine. The protein operates within cofactor biosynthesis; adenosylcobalamin biosynthesis; cob(II)yrinate a,c-diamide from sirohydrochlorin (anaerobic route): step 6/10. Catalyzes the methylation of C-1 in cobalt-precorrin-5B to form cobalt-precorrin-6A. This is Cobalt-precorrin-5B C(1)-methyltransferase from Methanoculleus marisnigri (strain ATCC 35101 / DSM 1498 / JR1).